The chain runs to 296 residues: Phosphatidylglycerol--prolipoprotein diacylglyceryl transferase (296 aa).

Residues M1 to L21 are disordered. 7 helical membrane passes run G34–I54, E72–T92, F108–I128, G136–R158, F195–W215, L227–E243, and L258–Q278. An a 1,2-diacyl-sn-glycero-3-phospho-(1'-sn-glycerol)-binding site is contributed by R158.

The protein belongs to the Lgt family.

It is found in the cell membrane. It carries out the reaction L-cysteinyl-[prolipoprotein] + a 1,2-diacyl-sn-glycero-3-phospho-(1'-sn-glycerol) = an S-1,2-diacyl-sn-glyceryl-L-cysteinyl-[prolipoprotein] + sn-glycerol 1-phosphate + H(+). The protein operates within protein modification; lipoprotein biosynthesis (diacylglyceryl transfer). Its function is as follows. Catalyzes the transfer of the diacylglyceryl group from phosphatidylglycerol to the sulfhydryl group of the N-terminal cysteine of a prolipoprotein, the first step in the formation of mature lipoproteins. In Cutibacterium acnes (strain DSM 16379 / KPA171202) (Propionibacterium acnes), this protein is Phosphatidylglycerol--prolipoprotein diacylglyceryl transferase.